The following is a 143-amino-acid chain: D-aminoacyl-tRNA deacylase (143 aa).

The Gly-cisPro motif, important for rejection of L-amino acids signature appears at 135–136; it reads GP.

It belongs to the DTD family. Homodimer.

It localises to the cytoplasm. It carries out the reaction glycyl-tRNA(Ala) + H2O = tRNA(Ala) + glycine + H(+). The enzyme catalyses a D-aminoacyl-tRNA + H2O = a tRNA + a D-alpha-amino acid + H(+). Functionally, an aminoacyl-tRNA editing enzyme that deacylates mischarged D-aminoacyl-tRNAs. Also deacylates mischarged glycyl-tRNA(Ala), protecting cells against glycine mischarging by AlaRS. Acts via tRNA-based rather than protein-based catalysis; rejects L-amino acids rather than detecting D-amino acids in the active site. By recycling D-aminoacyl-tRNA to D-amino acids and free tRNA molecules, this enzyme counteracts the toxicity associated with the formation of D-aminoacyl-tRNA entities in vivo and helps enforce protein L-homochirality. This chain is D-aminoacyl-tRNA deacylase, found in Nocardia farcinica (strain IFM 10152).